Consider the following 283-residue polypeptide: tRNA-cytidine(32) 2-sulfurtransferase (283 aa).

The short motif at 37-42 is the PP-loop motif element; it reads SGGKDS. 3 residues coordinate [4Fe-4S] cluster: cysteine 112, cysteine 115, and cysteine 203.

It belongs to the TtcA family. In terms of assembly, homodimer. It depends on Mg(2+) as a cofactor. Requires [4Fe-4S] cluster as cofactor.

Its subcellular location is the cytoplasm. The catalysed reaction is cytidine(32) in tRNA + S-sulfanyl-L-cysteinyl-[cysteine desulfurase] + AH2 + ATP = 2-thiocytidine(32) in tRNA + L-cysteinyl-[cysteine desulfurase] + A + AMP + diphosphate + H(+). The protein operates within tRNA modification. Catalyzes the ATP-dependent 2-thiolation of cytidine in position 32 of tRNA, to form 2-thiocytidine (s(2)C32). The sulfur atoms are provided by the cysteine/cysteine desulfurase (IscS) system. This Legionella pneumophila (strain Corby) protein is tRNA-cytidine(32) 2-sulfurtransferase.